Reading from the N-terminus, the 372-residue chain is Cytochrome b (372 aa).

4 helical membrane-spanning segments follow: residues 25–45 (FGSMLLTCSALQIMTGFFLSM), 69–90 (WMMQNLHAIGASMFFICVYIHV), 105–125 (WLSGTTLLIMLMATAFFGYVL), and 170–190 (FFALHFILPFGIISLSSLHIM). Positions 75 and 89 each coordinate heme b. Heme b contacts are provided by His174 and His188. Position 193 (His193) interacts with a ubiquinone. Helical transmembrane passes span 218-238 (YKDLFMISSMIMIMLLTISFI), 280-300 (LGGALALAMSIMILLTVPFTH), 312-332 (FMQLMFWTLVATFMIITWTAT), and 339-358 (YTMISQVTSSLYFMFFMSNP).

This sequence belongs to the cytochrome b family. In terms of assembly, the cytochrome bc1 complex contains 3 respiratory subunits (MT-CYB, CYC1 and UQCRFS1), 2 core proteins (UQCRC1 and UQCRC2) and probably 6 low-molecular weight proteins. Requires heme b as cofactor.

The protein resides in the mitochondrion inner membrane. Functionally, component of the ubiquinol-cytochrome c reductase complex (complex III or cytochrome b-c1 complex) that is part of the mitochondrial respiratory chain. The b-c1 complex mediates electron transfer from ubiquinol to cytochrome c. Contributes to the generation of a proton gradient across the mitochondrial membrane that is then used for ATP synthesis. In Acrantophis madagascariensis (Madagascar ground boa), this protein is Cytochrome b (MT-CYB).